A 315-amino-acid polypeptide reads, in one-letter code: Prephenate dehydratase (315 aa).

One can recognise a Prephenate dehydratase domain in the interval 3–189 (RIAYLGPEGT…ARTRFLLIGV (187 aa)). In terms of domain architecture, ACT spans 203-280 (SVVLRIANVP…ADVRYLGSWP (78 aa)).

In terms of assembly, homodimer.

It carries out the reaction prephenate + H(+) = 3-phenylpyruvate + CO2 + H2O. It participates in amino-acid biosynthesis; L-phenylalanine biosynthesis; phenylpyruvate from prephenate: step 1/1. This chain is Prephenate dehydratase (pheA), found in Mycobacterium marinum (strain ATCC BAA-535 / M).